The primary structure comprises 429 residues: Glutamate-1-semialdehyde 2,1-aminomutase 1 (429 aa).

Lysine 268 bears the N6-(pyridoxal phosphate)lysine mark.

The protein belongs to the class-III pyridoxal-phosphate-dependent aminotransferase family. HemL subfamily. Homodimer. Pyridoxal 5'-phosphate serves as cofactor.

It is found in the cytoplasm. The catalysed reaction is (S)-4-amino-5-oxopentanoate = 5-aminolevulinate. It participates in porphyrin-containing compound metabolism; protoporphyrin-IX biosynthesis; 5-aminolevulinate from L-glutamyl-tRNA(Glu): step 2/2. This is Glutamate-1-semialdehyde 2,1-aminomutase 1 from Listeria innocua serovar 6a (strain ATCC BAA-680 / CLIP 11262).